Here is a 491-residue protein sequence, read N- to C-terminus: MTQVLVRNGIQAVGDGLTSLIIVGKKSVLKNVTFEGKFKEVAQKFVTDGDSWNSMISRIPASGRHPLHYELAHLITVPDASSRGNTPTNAHSIYKELKPINYPEDTKNVHFVLFAEYPDVLSHVAAIARTFCKFSMKTSGIRELNVNIDVVCDKLTNEDAVFLTDLSESVRETARLIDTPANILTTDALVDEAVKVGNATGSKITVIRGEELLKAGFGGIYHVGKAGPTPPAFVVLSHEVPGSTEHIALVGKGVVYDTGGLQIKTKTGMPNMKRDMGGAAGMLEAYSALVKHGFSQTLHACLCIVENNVSPIANKPDDIIKMLSGKTVEINNTDAEGRLILADGVFYAKETLKATTIFDMATLTGAQAWLSGRLHGAAMTNDEQLENEIIKAGKASGDLVAPMLFAPDLFFGDLKSSIADMKNSNLGKMDGPPSAVAGLFIGAHIGFGEGLRWLHLDIAAPAEVGDRGTGYGPALFSTLLGKYTSVPMLKQ.

Positions 252 and 257 each coordinate Zn(2+). Residue K264 is part of the active site. Residues D275, D334, and E336 each coordinate Zn(2+). The active site involves R338.

Belongs to the peptidase M17 family. The cofactor is Zn(2+). In terms of tissue distribution, expressed in the buccal cavity, pharynx, anterior gut and rectum.

The catalysed reaction is Release of an N-terminal amino acid, Xaa-|-Yaa-, in which Xaa is preferably Leu, but may be other amino acids including Pro although not Arg or Lys, and Yaa may be Pro. Amino acid amides and methyl esters are also readily hydrolyzed, but rates on arylamides are exceedingly low.. Functionally, probably acts as a digestive enzyme. The protein is Leucine aminopeptidase 1 (lap-1) of Caenorhabditis elegans.